Here is a 270-residue protein sequence, read N- to C-terminus: Release factor glutamine methyltransferase (270 aa).

Residues 113 to 117, D136, and N177 contribute to the S-adenosyl-L-methionine site; that span reads GTGSG. 177-180 is a substrate binding site; that stretch reads NPPY.

The protein belongs to the protein N5-glutamine methyltransferase family. PrmC subfamily.

It carries out the reaction L-glutaminyl-[peptide chain release factor] + S-adenosyl-L-methionine = N(5)-methyl-L-glutaminyl-[peptide chain release factor] + S-adenosyl-L-homocysteine + H(+). In terms of biological role, methylates the class 1 translation termination release factors RF1/PrfA and RF2/PrfB on the glutamine residue of the universally conserved GGQ motif. In Lactococcus lactis subsp. lactis (strain IL1403) (Streptococcus lactis), this protein is Release factor glutamine methyltransferase.